Reading from the N-terminus, the 431-residue chain is Histidinol dehydrogenase (431 aa).

NAD(+) contacts are provided by Tyr130, Gln191, and Asn214. 3 residues coordinate substrate: Ser237, Gln259, and His262. The Zn(2+) site is built by Gln259 and His262. Residues Glu327 and His328 each act as proton acceptor in the active site. 4 residues coordinate substrate: His328, Asp361, Glu415, and His420. Asp361 serves as a coordination point for Zn(2+). A Zn(2+)-binding site is contributed by His420.

It belongs to the histidinol dehydrogenase family. Requires Zn(2+) as cofactor.

It carries out the reaction L-histidinol + 2 NAD(+) + H2O = L-histidine + 2 NADH + 3 H(+). The protein operates within amino-acid biosynthesis; L-histidine biosynthesis; L-histidine from 5-phospho-alpha-D-ribose 1-diphosphate: step 9/9. Its function is as follows. Catalyzes the sequential NAD-dependent oxidations of L-histidinol to L-histidinaldehyde and then to L-histidine. The chain is Histidinol dehydrogenase from Syntrophotalea carbinolica (strain DSM 2380 / NBRC 103641 / GraBd1) (Pelobacter carbinolicus).